Here is a 669-residue protein sequence, read N- to C-terminus: Translation factor GUF1, mitochondrial (669 aa).

A mitochondrion-targeting transit peptide spans 1-49; that stretch reads MWTLVGRGWGCARALAPRATGAALLVAPGPRSAPTLGAAPESWATDRLY. The region spanning 66–247 is the tr-type G domain; sequence ENIRNFSIVA…AIIERIPPPK (182 aa). GTP contacts are provided by residues 75 to 82, 140 to 144, and 194 to 197; these read AHVDHGKS, DTPGH, and NKID.

It belongs to the TRAFAC class translation factor GTPase superfamily. Classic translation factor GTPase family. LepA subfamily.

It is found in the mitochondrion inner membrane. The catalysed reaction is GTP + H2O = GDP + phosphate + H(+). In terms of biological role, promotes mitochondrial protein synthesis. May act as a fidelity factor of the translation reaction, by catalyzing a one-codon backward translocation of tRNAs on improperly translocated ribosomes. Binds to mitochondrial ribosomes in a GTP-dependent manner. The sequence is that of Translation factor GUF1, mitochondrial from Homo sapiens (Human).